Here is a 422-residue protein sequence, read N- to C-terminus: Histidine--tRNA ligase (422 aa).

The protein belongs to the class-II aminoacyl-tRNA synthetase family. Homodimer.

It is found in the cytoplasm. It catalyses the reaction tRNA(His) + L-histidine + ATP = L-histidyl-tRNA(His) + AMP + diphosphate + H(+). This is Histidine--tRNA ligase from Vesicomyosocius okutanii subsp. Calyptogena okutanii (strain HA).